A 286-amino-acid chain; its full sequence is 4-hydroxy-3-methylbut-2-enyl diphosphate reductase (286 aa).

C12 lines the [4Fe-4S] cluster pocket. The (2E)-4-hydroxy-3-methylbut-2-enyl diphosphate site is built by H46 and H79. Positions 46 and 79 each coordinate dimethylallyl diphosphate. The isopentenyl diphosphate site is built by H46 and H79. C101 is a [4Fe-4S] cluster binding site. H129 is a (2E)-4-hydroxy-3-methylbut-2-enyl diphosphate binding site. H129 serves as a coordination point for dimethylallyl diphosphate. H129 contacts isopentenyl diphosphate. Residue E131 is the Proton donor of the active site. Residue T169 coordinates (2E)-4-hydroxy-3-methylbut-2-enyl diphosphate. C198 lines the [4Fe-4S] cluster pocket. 3 residues coordinate (2E)-4-hydroxy-3-methylbut-2-enyl diphosphate: S226, N228, and S270. The dimethylallyl diphosphate site is built by S226, N228, and S270. Isopentenyl diphosphate-binding residues include S226, N228, and S270.

This sequence belongs to the IspH family. Requires [4Fe-4S] cluster as cofactor.

The catalysed reaction is isopentenyl diphosphate + 2 oxidized [2Fe-2S]-[ferredoxin] + H2O = (2E)-4-hydroxy-3-methylbut-2-enyl diphosphate + 2 reduced [2Fe-2S]-[ferredoxin] + 2 H(+). It carries out the reaction dimethylallyl diphosphate + 2 oxidized [2Fe-2S]-[ferredoxin] + H2O = (2E)-4-hydroxy-3-methylbut-2-enyl diphosphate + 2 reduced [2Fe-2S]-[ferredoxin] + 2 H(+). It participates in isoprenoid biosynthesis; dimethylallyl diphosphate biosynthesis; dimethylallyl diphosphate from (2E)-4-hydroxy-3-methylbutenyl diphosphate: step 1/1. Its pathway is isoprenoid biosynthesis; isopentenyl diphosphate biosynthesis via DXP pathway; isopentenyl diphosphate from 1-deoxy-D-xylulose 5-phosphate: step 6/6. Functionally, catalyzes the conversion of 1-hydroxy-2-methyl-2-(E)-butenyl 4-diphosphate (HMBPP) into a mixture of isopentenyl diphosphate (IPP) and dimethylallyl diphosphate (DMAPP). Acts in the terminal step of the DOXP/MEP pathway for isoprenoid precursor biosynthesis. This is 4-hydroxy-3-methylbut-2-enyl diphosphate reductase from Solidesulfovibrio magneticus (strain ATCC 700980 / DSM 13731 / RS-1) (Desulfovibrio magneticus).